Consider the following 287-residue polypeptide: ATP synthase gamma chain (287 aa).

This sequence belongs to the ATPase gamma chain family. F-type ATPases have 2 components, CF(1) - the catalytic core - and CF(0) - the membrane proton channel. CF(1) has five subunits: alpha(3), beta(3), gamma(1), delta(1), epsilon(1). CF(0) has three main subunits: a, b and c.

The protein resides in the cell inner membrane. Functionally, produces ATP from ADP in the presence of a proton gradient across the membrane. The gamma chain is believed to be important in regulating ATPase activity and the flow of protons through the CF(0) complex. This Methylococcus capsulatus (strain ATCC 33009 / NCIMB 11132 / Bath) protein is ATP synthase gamma chain.